Here is a 442-residue protein sequence, read N- to C-terminus: Transcription factor AP-2-epsilon (442 aa).

The PPxY motif motif lies at 54–59 (YFPPPY). Serine 246 carries the phosphoserine; by PKA modification. The interval 287 to 417 (RRKAANVTLL…YLLESLKGLD (131 aa)) is H-S-H (helix-span-helix), dimerization.

This sequence belongs to the AP-2 family. As to quaternary structure, binds DNA as a dimer. Can form homodimers or heterodimers with other AP-2 family members. In terms of tissue distribution, expressed in skin, primary keratinocytes, immortalized keratinocytes, and HeLa cell line.

It localises to the nucleus. Sequence-specific DNA-binding protein that interacts with inducible viral and cellular enhancer elements to regulate transcription of selected genes. AP-2 factors bind to the consensus sequence 5'-GCCNNNGGC-3' and activate genes involved in a large spectrum of important biological functions including proper eye, face, body wall, limb and neural tube development. They also suppress a number of genes including MCAM/MUC18, C/EBP alpha and MYC. AP-2-epsilon may play a role in the development of the CNS and in cartilage differentiation. The sequence is that of Transcription factor AP-2-epsilon from Homo sapiens (Human).